A 156-amino-acid chain; its full sequence is Ribosomal RNA large subunit methyltransferase H (156 aa).

S-adenosyl-L-methionine is bound by residues Leu73, Gly104, and 123–128 (ISSMTL).

Belongs to the RNA methyltransferase RlmH family. In terms of assembly, homodimer.

It localises to the cytoplasm. The enzyme catalyses pseudouridine(1915) in 23S rRNA + S-adenosyl-L-methionine = N(3)-methylpseudouridine(1915) in 23S rRNA + S-adenosyl-L-homocysteine + H(+). Functionally, specifically methylates the pseudouridine at position 1915 (m3Psi1915) in 23S rRNA. The polypeptide is Ribosomal RNA large subunit methyltransferase H (Burkholderia ambifaria (strain MC40-6)).